The sequence spans 236 residues: 3-deoxy-D-manno-octulosonic acid kinase (236 aa).

The active site involves D167.

The protein belongs to the protein kinase superfamily. KdkA/RfaP family.

It is found in the cell inner membrane. The enzyme catalyses an alpha-Kdo-(2-&gt;6)-lipid IVA + ATP = a 4-O-phospho-alpha-Kdo-(2-&gt;6)-lipid IVA + ADP + H(+). It participates in bacterial outer membrane biogenesis; LPS core biosynthesis. In terms of biological role, catalyzes the ATP-dependent phosphorylation of the 3-deoxy-D-manno-octulosonic acid (Kdo) residue in Kdo-lipid IV(A) at the 4-OH position. The protein is 3-deoxy-D-manno-octulosonic acid kinase of Vibrio vulnificus (strain CMCP6).